Here is a 530-residue protein sequence, read N- to C-terminus: Bifunctional purine biosynthesis protein PurH (530 aa).

The MGS-like domain maps to 1 to 148 (MEQARPIRRA…KNHKDVAIVV (148 aa)).

The protein belongs to the PurH family.

The catalysed reaction is (6R)-10-formyltetrahydrofolate + 5-amino-1-(5-phospho-beta-D-ribosyl)imidazole-4-carboxamide = 5-formamido-1-(5-phospho-D-ribosyl)imidazole-4-carboxamide + (6S)-5,6,7,8-tetrahydrofolate. It catalyses the reaction IMP + H2O = 5-formamido-1-(5-phospho-D-ribosyl)imidazole-4-carboxamide. It functions in the pathway purine metabolism; IMP biosynthesis via de novo pathway; 5-formamido-1-(5-phospho-D-ribosyl)imidazole-4-carboxamide from 5-amino-1-(5-phospho-D-ribosyl)imidazole-4-carboxamide (10-formyl THF route): step 1/1. The protein operates within purine metabolism; IMP biosynthesis via de novo pathway; IMP from 5-formamido-1-(5-phospho-D-ribosyl)imidazole-4-carboxamide: step 1/1. This is Bifunctional purine biosynthesis protein PurH from Aeromonas salmonicida (strain A449).